A 430-amino-acid chain; its full sequence is MAATTNSFLVGSNNTQIPALKPKSSSQSFLHLSKPNTVNFVSKTKPVAVRCVASTTQVQDGVRSGSVGSQERVFNFAAGPATLPENVLLKAQADLYNWRGSGMSVMEMSHRGKEFLSIIQKAESDLRQLLEIPQEYSVLFLQGGATTQFAALPLNLCKSDDTVDFVVTGSWGDKAVKEAKKYCKTNVIWSGKSEKYTKVPSFEELEQTPDAKYLHICANETIHGVEFKDYPVPKNGFLVADMSSNFCSKPVDVSKFGVIYGGAQKNVGPSGVTIVIIRKDLIGNAQDITPVMLDYKIHDENSSLYNTPPCFGIYMCGLVFEDLLEQGGLKEVEKKNQRKADLLYNAIEESNGFFRCPVEKSVRSLMNVPFTLEKSELEAEFIKEAAKEKMVQLKGHRSVGGMRASIYNAMPLAGVEKLVAFMKDFQAKHA.

A chloroplast-targeting transit peptide spans 1-51; that stretch reads MAATTNSFLVGSNNTQIPALKPKSSSQSFLHLSKPNTVNFVSKTKPVAVRC. Val-52 carries the post-translational modification N-acetylvaline. Arg-111 is a binding site for L-glutamate. Pyridoxal 5'-phosphate-binding positions include 145-146, Trp-171, Thr-221, Asp-241, and Gln-264; that span reads AT. At Lys-265 the chain carries N6-(pyridoxal phosphate)lysine. 306–307 provides a ligand contact to pyridoxal 5'-phosphate; it reads NT.

This sequence belongs to the class-V pyridoxal-phosphate-dependent aminotransferase family. SerC subfamily. Homodimer. Pyridoxal 5'-phosphate is required as a cofactor. Ubiquitous, but expressed preferentially in light-grown roots and shoots. Detected in root meristems and in root tissues surrounding the vascular bundle.

Its subcellular location is the plastid. The protein resides in the chloroplast. The catalysed reaction is O-phospho-L-serine + 2-oxoglutarate = 3-phosphooxypyruvate + L-glutamate. It carries out the reaction 4-(phosphooxy)-L-threonine + 2-oxoglutarate = (R)-3-hydroxy-2-oxo-4-phosphooxybutanoate + L-glutamate. It functions in the pathway amino-acid biosynthesis; L-serine biosynthesis; L-serine from 3-phospho-D-glycerate: step 2/3. Its pathway is cofactor biosynthesis; pyridoxine 5'-phosphate biosynthesis; pyridoxine 5'-phosphate from D-erythrose 4-phosphate: step 3/5. Its activity is regulated as follows. Inhibited by high concentration of cysteine and by 3-phosphonooxypyruvate. Not inhibited by serine, threonine, valine, glycine, tryptophan and O-acetyl-L-serine. Its function is as follows. Involved in the plastidial phosphorylated pathway of serine biosynthesis (PPSB). Catalyzes the reversible conversion of 3-phosphohydroxypyruvate to phosphoserine. In Arabidopsis thaliana (Mouse-ear cress), this protein is Phosphoserine aminotransferase 1, chloroplastic.